The chain runs to 503 residues: D-alanine--D-alanyl carrier protein ligase (503 aa).

Position 151–152 (151–152 (TS)) interacts with ATP. D196 contributes to the D-alanine binding site. 291–296 (NTYGPT) serves as a coordination point for ATP. D-alanine is bound at residue V300. ATP contacts are provided by D382 and K491. K491 contributes to the D-alanine binding site.

The protein belongs to the ATP-dependent AMP-binding enzyme family. DltA subfamily.

Its subcellular location is the cytoplasm. The enzyme catalyses holo-[D-alanyl-carrier protein] + D-alanine + ATP = D-alanyl-[D-alanyl-carrier protein] + AMP + diphosphate. Its pathway is cell wall biogenesis; lipoteichoic acid biosynthesis. Catalyzes the first step in the D-alanylation of lipoteichoic acid (LTA), the activation of D-alanine and its transfer onto the D-alanyl carrier protein (Dcp) DltC. In an ATP-dependent two-step reaction, forms a high energy D-alanyl-AMP intermediate, followed by transfer of the D-alanyl residue as a thiol ester to the phosphopantheinyl prosthetic group of the Dcp. D-alanylation of LTA plays an important role in modulating the properties of the cell wall in Gram-positive bacteria, influencing the net charge of the cell wall. The chain is D-alanine--D-alanyl carrier protein ligase from Bacillus velezensis (strain DSM 23117 / BGSC 10A6 / LMG 26770 / FZB42) (Bacillus amyloliquefaciens subsp. plantarum).